The chain runs to 1129 residues: Translation initiation factor IF-2 (1129 aa).

Composition is skewed to low complexity over residues 33-42 (AARSHSSSIS) and 56-99 (GGSP…AAKP). 2 disordered regions span residues 33 to 462 (AARS…IGEN) and 485 to 515 (SLARPSKPRTKHKPAPKPVAAIRKRRKETAR). Over residues 100–112 (SPKPSAPSRPEAP) the composition is skewed to pro residues. Residues 135–147 (STPAAAAPAAAPS) are compositionally biased toward low complexity. Residues 148 to 161 (APAPSAPTPRPKPT) are compositionally biased toward pro residues. A compositionally biased stretch (low complexity) spans 162-175 (APKASAPAPTASAP). 2 stretches are compositionally biased toward pro residues: residues 176–191 (SAPPRPTSARPTPAPA) and 211–221 (PTAPPTRPQPK). Residues 257–273 (GQRPGVSPRPSGPPGQR) are compositionally biased toward low complexity. Over residues 431–445 (GRPDWDDSAKLEALR) the composition is skewed to basic and acidic residues. Composition is skewed to basic residues over residues 490 to 499 (SKPRTKHKPA) and 506 to 515 (IRKRRKETAR). Residues 621 to 793 (RRPPVVTVMG…ILLVTEVEDL (173 aa)) form the tr-type G domain. Residues 630 to 637 (GHVDHGKT) are G1. 630–637 (GHVDHGKT) serves as a coordination point for GTP. The G2 stretch occupies residues 655 to 659 (GITQH). A G3 region spans residues 680–683 (DTPG). GTP contacts are provided by residues 680–684 (DTPGH) and 734–737 (NKID). A G4 region spans residues 734–737 (NKID). The interval 770–772 (SAL) is G5.

Belongs to the TRAFAC class translation factor GTPase superfamily. Classic translation factor GTPase family. IF-2 subfamily.

The protein localises to the cytoplasm. In terms of biological role, one of the essential components for the initiation of protein synthesis. Protects formylmethionyl-tRNA from spontaneous hydrolysis and promotes its binding to the 30S ribosomal subunits. Also involved in the hydrolysis of GTP during the formation of the 70S ribosomal complex. The polypeptide is Translation initiation factor IF-2 (Synechococcus sp. (strain CC9311)).